We begin with the raw amino-acid sequence, 462 residues long: Polygalacturonase (462 aa).

The first 22 residues, 1-22 (MALTRLLLPISILWFCFYSSHT), serve as a signal peptide directing secretion. N173 carries N-linked (GlcNAc...) asparagine glycosylation. Catalysis depends on D278, which acts as the Proton donor. A disulfide bridge connects residues C280 and C297. N-linked (GlcNAc...) asparagine glycosylation is present at N294. H301 is an active-site residue. N-linked (GlcNAc...) asparagine glycosylation occurs at N358. 2 disulfide bridges follow: C407-C413 and C435-C460.

This sequence belongs to the glycosyl hydrolase 28 family.

It is found in the secreted. It localises to the cell wall. It carries out the reaction (1,4-alpha-D-galacturonosyl)n+m + H2O = (1,4-alpha-D-galacturonosyl)n + (1,4-alpha-D-galacturonosyl)m.. Functionally, acts in concert with the pectinesterase, in the ripening process. Is involved in cell wall metabolism, specifically in polyuronide degradation. The polypeptide is Polygalacturonase (Persea americana (Avocado)).